The sequence spans 122 residues: Small ribosomal subunit protein uS12cz/uS12cy (122 aa).

The protein belongs to the universal ribosomal protein uS12 family. Part of the 30S ribosomal subunit.

Its subcellular location is the plastid. The protein resides in the chloroplast. Functionally, with S4 and S5 plays an important role in translational accuracy. Located at the interface of the 30S and 50S subunits. This chain is Small ribosomal subunit protein uS12cz/uS12cy (rps12-A), found in Triticum aestivum (Wheat).